Consider the following 445-residue polypeptide: Asparagine--tRNA ligase (445 aa).

This sequence belongs to the class-II aminoacyl-tRNA synthetase family. In terms of assembly, homodimer.

The protein localises to the cytoplasm. The catalysed reaction is tRNA(Asn) + L-asparagine + ATP = L-asparaginyl-tRNA(Asn) + AMP + diphosphate + H(+). This is Asparagine--tRNA ligase from Deinococcus deserti (strain DSM 17065 / CIP 109153 / LMG 22923 / VCD115).